The sequence spans 211 residues: FMN-dependent NADH:quinone oxidoreductase (211 aa).

17-19 contributes to the FMN binding site; the sequence is SYS.

The protein belongs to the azoreductase type 1 family. Homodimer. The cofactor is FMN.

The catalysed reaction is 2 a quinone + NADH + H(+) = 2 a 1,4-benzosemiquinone + NAD(+). The enzyme catalyses N,N-dimethyl-1,4-phenylenediamine + anthranilate + 2 NAD(+) = 2-(4-dimethylaminophenyl)diazenylbenzoate + 2 NADH + 2 H(+). Quinone reductase that provides resistance to thiol-specific stress caused by electrophilic quinones. Functionally, also exhibits azoreductase activity. Catalyzes the reductive cleavage of the azo bond in aromatic azo compounds to the corresponding amines. This is FMN-dependent NADH:quinone oxidoreductase from Bacillus pumilus (strain SAFR-032).